The chain runs to 144 residues: Ribonuclease VapC1 (144 aa).

The region spanning 6–132 (VFVDGNVIVD…SFYSPDIEVL (127 aa)) is the PINc domain. Positions 9 and 102 each coordinate Mg(2+).

This sequence belongs to the PINc/VapC protein family. It depends on Mg(2+) as a cofactor.

Toxic component of a type II toxin-antitoxin (TA) system. An RNase. This is Ribonuclease VapC1 from Aquifex aeolicus (strain VF5).